Consider the following 89-residue polypeptide: Antimicrobial peptide Ar-AMP (89 aa).

Positions 1-25 are cleaved as a signal peptide; sequence MVNMKSVALIVIVMMAFMMVDPSMG. The 43-residue stretch at 26-68 folds into the Chitin-binding type-1 domain; that stretch reads AGECVQGRCPSGMCCSQFGYCGRGPKYCGRASTTVDHQADAAA. 3 cysteine pairs are disulfide-bonded: cysteine 29–cysteine 40, cysteine 34–cysteine 46, and cysteine 39–cysteine 53. A propeptide spans 56–89 (removed in mature form); that stretch reads ASTTVDHQADAAAAAATKTANNPTDAKLAGAGSP.

Chitin-binding protein that inhibits the growth of the fungal pathogens B.cinerea, F.culmorum, H.sativum and A.consortiale, but not that of R.solani. Induces morphological changes in the fungal pathogens F.culmorum, H.sativum and R.solani, but not in A.consortiale and B.cinerea. Has antibacterial activity against the Gram-positive bacterium B.subtilis, but lacks antibacterial activity against the Gram-negative bacterium E.coli. This is Antimicrobial peptide Ar-AMP from Amaranthus retroflexus (Redroot amaranth).